The sequence spans 136 residues: Protein NrdI (136 aa).

The protein belongs to the NrdI family.

Functionally, probably involved in ribonucleotide reductase function. The sequence is that of Protein NrdI from Escherichia coli O7:K1 (strain IAI39 / ExPEC).